We begin with the raw amino-acid sequence, 89 residues long: Protein FAM25A (89 aa).

The protein belongs to the FAM25 family.

The protein is Protein FAM25A of Mus musculus (Mouse).